Consider the following 153-residue polypeptide: Histone H2B.6 (153 aa).

2 stretches are compositionally biased toward basic and acidic residues: residues Met1–Pro28 and Glu36–Lys53. The segment at Met1 to Lys60 is disordered. Residues Lys7 and Lys37 each carry the N6-acetyllysine modification. Lys149 is covalently cross-linked (Glycyl lysine isopeptide (Lys-Gly) (interchain with G-Cter in ubiquitin)).

It belongs to the histone H2B family. The nucleosome is a histone octamer containing two molecules each of H2A, H2B, H3 and H4 assembled in one H3-H4 heterotetramer and two H2A-H2B heterodimers. The octamer wraps approximately 147 bp of DNA. Post-translationally, can be acetylated to form H2BK6ac and H2BK33ac. Monoubiquitinated by BRE1 to form H2BK143ub1 and deubiquitinated by UBP26. Required for heterochromatic histone H3 di- and trimethylation at H3K4me. May give a specific tag for epigenetic transcriptional activation.

It is found in the nucleus. It localises to the chromosome. Its function is as follows. Core component of nucleosome. Nucleosomes wrap and compact DNA into chromatin, limiting DNA accessibility to the cellular machineries which require DNA as a template. Histones thereby play a central role in transcription regulation, DNA repair, DNA replication and chromosomal stability. DNA accessibility is regulated via a complex set of post-translational modifications of histones, also called histone code, and nucleosome remodeling. This is Histone H2B.6 (H2B.6) from Oryza sativa subsp. japonica (Rice).